The following is an 89-amino-acid chain: Large ribosomal subunit protein bL27 (89 aa).

The disordered stretch occupies residues 1 to 22; that stretch reads MAHKKAGGSSRNGRDSESKRLG.

This sequence belongs to the bacterial ribosomal protein bL27 family.

The polypeptide is Large ribosomal subunit protein bL27 (Rhizobium etli (strain CIAT 652)).